The primary structure comprises 447 residues: tRNA modification GTPase MnmE (447 aa).

Arg22, Glu81, and Lys121 together coordinate (6S)-5-formyl-5,6,7,8-tetrahydrofolate. A TrmE-type G domain is found at 217–373 (GIVLAITGET…LMSEIVSYAE (157 aa)). A K(+)-binding site is contributed by Asn227. GTP contacts are provided by residues 227–232 (NTGKSS), 246–252 (SDIPGTT), and 271–274 (DTAG). Position 231 (Ser231) interacts with Mg(2+). K(+)-binding residues include Ser246, Ile248, and Thr251. Residue Thr252 participates in Mg(2+) binding. Residue Lys447 participates in (6S)-5-formyl-5,6,7,8-tetrahydrofolate binding.

This sequence belongs to the TRAFAC class TrmE-Era-EngA-EngB-Septin-like GTPase superfamily. TrmE GTPase family. In terms of assembly, homodimer. Heterotetramer of two MnmE and two MnmG subunits. It depends on K(+) as a cofactor.

The protein localises to the cytoplasm. Exhibits a very high intrinsic GTPase hydrolysis rate. Involved in the addition of a carboxymethylaminomethyl (cmnm) group at the wobble position (U34) of certain tRNAs, forming tRNA-cmnm(5)s(2)U34. In Orientia tsutsugamushi (strain Boryong) (Rickettsia tsutsugamushi), this protein is tRNA modification GTPase MnmE.